Consider the following 451-residue polypeptide: SH2 domain-containing protein 7 (451 aa).

Residues 51–142 form the SH2 domain; that stretch reads WFHGFITRKQ…PFKEMLTAAC (92 aa). Disordered stretches follow at residues 180–232, 256–321, and 408–436; these read KAAS…SLLE, LGTE…SDAM, and GTPELSEPGNTYEQIPATKSKETGRTHKP. Over residues 221–232 the composition is skewed to low complexity; that stretch reads SPLPEKSSSLLE. Basic and acidic residues predominate over residues 279 to 291; it reads EAQRRLSDGEQNR. Residues 306–316 are compositionally biased toward polar residues; that stretch reads QGPTESPTSWG. Over residues 426-436 the composition is skewed to basic and acidic residues; sequence KSKETGRTHKP.

This chain is SH2 domain-containing protein 7 (SH2D7), found in Homo sapiens (Human).